A 338-amino-acid chain; its full sequence is Probable 1-aminocyclopropane-1-carboxylate deaminase (338 aa).

N6-(pyridoxal phosphate)lysine is present on Lys51. The Nucleophile role is filled by Ser78.

The protein belongs to the ACC deaminase/D-cysteine desulfhydrase family. The cofactor is pyridoxal 5'-phosphate.

The catalysed reaction is 1-aminocyclopropane-1-carboxylate + H2O = 2-oxobutanoate + NH4(+). Its function is as follows. Catalyzes a cyclopropane ring-opening reaction, the irreversible conversion of 1-aminocyclopropane-1-carboxylate (ACC) to ammonia and alpha-ketobutyrate. This chain is Probable 1-aminocyclopropane-1-carboxylate deaminase, found in Schizosaccharomyces pombe (strain 972 / ATCC 24843) (Fission yeast).